Reading from the N-terminus, the 369-residue chain is Histone deacetylase-like amidohydrolase (369 aa).

The active-site Proton donor/acceptor is His143. Asp180, His182, and Asp268 together coordinate Zn(2+).

This sequence belongs to the histone deacetylase family. In terms of assembly, homotetramer; dimer of dimers. Zn(2+) serves as cofactor.

Its activity is regulated as follows. Zinc, and cobalt and nickel at a lesser extent, are able to increase the catalytic activity (2.2-, 1.3- and 1.1-fold respectively) at concentrations of 1 mM. Higher concentrations have an inhibitory effect. Magnesium, manganese and calcium have no effect on activity at concentrations between 0 and 10 mM. At 100 mM, the catalytic activity is increased between 1.2- and 2.1-fold. Hydroxamates like TSA and SAHA inhibit the enzyme. Is also inhibited by azobenzenes, stilbenes and arylazopyrazoles. Functionally, exhibits significant levels of protein deacetylase activity comparable to those of eukaryotic HDACs in assays both with fluorogenic peptidic substrates and acetate-radiolabeled histones. Accepts proteins with epsilon-acetylated lysine residues and tritiated-acetate-prelabeled chicken histones as substrates. The natural substrate protein is not yet known. This chain is Histone deacetylase-like amidohydrolase (hdaH), found in Alcaligenes sp. (strain DSM 11172) (Bordetella sp. (strain FB188)).